The following is a 123-amino-acid chain: Translation initiation factor 1A (123 aa).

The segment covering 1–11 (MSPDKTEDEDK) has biased composition (acidic residues). The segment at 1-26 (MSPDKTEDEDKDVNVDQDQFNEEEES) is disordered. One can recognise an S1-like domain in the interval 28–102 (GRVILPNKKK…EKADVVYRYT (75 aa)).

The protein belongs to the eIF-1A family.

Functionally, seems to be required for maximal rate of protein biosynthesis. Enhances ribosome dissociation into subunits and stabilizes the binding of the initiator Met-tRNA(I) to 40 S ribosomal subunits. The sequence is that of Translation initiation factor 1A (eIF1A) from Thermoplasma volcanium (strain ATCC 51530 / DSM 4299 / JCM 9571 / NBRC 15438 / GSS1).